The chain runs to 219 residues: Thiamine-phosphate synthase (219 aa).

Residues 44 to 48 and Asn-79 contribute to the 4-amino-2-methyl-5-(diphosphooxymethyl)pyrimidine site; that span reads QFREK. Residues Asp-80 and Asp-99 each coordinate Mg(2+). A 4-amino-2-methyl-5-(diphosphooxymethyl)pyrimidine-binding site is contributed by Ser-117. Position 143-145 (143-145) interacts with 2-[(2R,5Z)-2-carboxy-4-methylthiazol-5(2H)-ylidene]ethyl phosphate; the sequence is TST. Residue Lys-146 coordinates 4-amino-2-methyl-5-(diphosphooxymethyl)pyrimidine. 2-[(2R,5Z)-2-carboxy-4-methylthiazol-5(2H)-ylidene]ethyl phosphate is bound by residues Gly-175 and 195 to 196; that span reads IS.

Belongs to the thiamine-phosphate synthase family. Mg(2+) is required as a cofactor.

The catalysed reaction is 2-[(2R,5Z)-2-carboxy-4-methylthiazol-5(2H)-ylidene]ethyl phosphate + 4-amino-2-methyl-5-(diphosphooxymethyl)pyrimidine + 2 H(+) = thiamine phosphate + CO2 + diphosphate. The enzyme catalyses 2-(2-carboxy-4-methylthiazol-5-yl)ethyl phosphate + 4-amino-2-methyl-5-(diphosphooxymethyl)pyrimidine + 2 H(+) = thiamine phosphate + CO2 + diphosphate. It carries out the reaction 4-methyl-5-(2-phosphooxyethyl)-thiazole + 4-amino-2-methyl-5-(diphosphooxymethyl)pyrimidine + H(+) = thiamine phosphate + diphosphate. The protein operates within cofactor biosynthesis; thiamine diphosphate biosynthesis; thiamine phosphate from 4-amino-2-methyl-5-diphosphomethylpyrimidine and 4-methyl-5-(2-phosphoethyl)-thiazole: step 1/1. In terms of biological role, condenses 4-methyl-5-(beta-hydroxyethyl)thiazole monophosphate (THZ-P) and 2-methyl-4-amino-5-hydroxymethyl pyrimidine pyrophosphate (HMP-PP) to form thiamine monophosphate (TMP). This chain is Thiamine-phosphate synthase, found in Bacillus cereus (strain ZK / E33L).